The following is a 421-amino-acid chain: NADH-quinone oxidoreductase subunit F (421 aa).

Position 54–63 (54–63) interacts with NAD(+); that stretch reads GRGGAGFSTG. Residue 166 to 213 coordinates FMN; sequence GAGAYICGEETALLESLEGKKGMPRLKPPFPAGFGLYGCPTTINNVES. [4Fe-4S] cluster contacts are provided by C344, C347, C350, and C390.

Belongs to the complex I 51 kDa subunit family. It depends on FMN as a cofactor. The cofactor is [4Fe-4S] cluster.

The enzyme catalyses a quinone + NADH + 5 H(+)(in) = a quinol + NAD(+) + 4 H(+)(out). In terms of biological role, NDH-1 shuttles electrons from NADH, via FMN and iron-sulfur (Fe-S) centers, to quinones in the respiratory chain. Couples the redox reaction to proton translocation (for every two electrons transferred, four hydrogen ions are translocated across the cytoplasmic membrane), and thus conserves the redox energy in a proton gradient. In Rickettsia rickettsii (strain Sheila Smith), this protein is NADH-quinone oxidoreductase subunit F (nuoF).